Here is a 608-residue protein sequence, read N- to C-terminus: uncharacterized protein (608 aa).

The first 38 residues, 1-38, serve as a signal peptide directing secretion; sequence MWLQQRLKVFPGLLSSSWARRVLAVSGFLVIIYWYIFS. Topologically, residues 39-563 are extracellular; sequence GSLFRSFWYA…EEHMAKQYRG (525 aa). N-linked (GlcNAc...) asparagine glycosylation is present at Asn-337. A helical transmembrane segment spans residues 564–584; it reads LPFLFWFSVASLITLFHLFLF. The Cytoplasmic portion of the chain corresponds to 585–608; that stretch reads KLIYNEYCGPGAKPLFRSKEDTSV.

Its subcellular location is the membrane. This is an uncharacterized protein from Xenopus tropicalis (Western clawed frog).